A 318-amino-acid polypeptide reads, in one-letter code: NADH-ubiquinone oxidoreductase chain 1 (318 aa).

8 helical membrane-spanning segments follow: residues 2 to 22, 71 to 91, 98 to 118, 146 to 166, 171 to 191, 222 to 242, 253 to 273, and 294 to 314; these read FMVN…FLTL, YIIA…PLPI, INLG…SILW, LAII…STLI, HTWL…STLA, LFFM…ATIF, EFFS…FLWV, and LPLT…LANI.

The protein belongs to the complex I subunit 1 family.

The protein resides in the mitochondrion inner membrane. It carries out the reaction a ubiquinone + NADH + 5 H(+)(in) = a ubiquinol + NAD(+) + 4 H(+)(out). Its function is as follows. Core subunit of the mitochondrial membrane respiratory chain NADH dehydrogenase (Complex I) that is believed to belong to the minimal assembly required for catalysis. Complex I functions in the transfer of electrons from NADH to the respiratory chain. The immediate electron acceptor for the enzyme is believed to be ubiquinone. This is NADH-ubiquinone oxidoreductase chain 1 (MT-ND1) from Nycticebus coucang (Slow loris).